The chain runs to 287 residues: Nucleotide-binding protein Sfri_3380 (287 aa).

8-15 (GRSGSGKS) is an ATP binding site. 56-59 (DVRN) is a GTP binding site.

It belongs to the RapZ-like family.

In terms of biological role, displays ATPase and GTPase activities. The polypeptide is Nucleotide-binding protein Sfri_3380 (Shewanella frigidimarina (strain NCIMB 400)).